We begin with the raw amino-acid sequence, 308 residues long: FGSLLGLCLITQIITGLLLAMHYTADTSLAFTSVAHMCRNVQFGWLIRNLHANGASFFFICIYLHIGRGIYYGSYLNKETWNIGVILLLTLMATAFVGYVLPWGQMSFWGATVITNLFSAIPYIGQTLVEWLWGGFSVDNPTLTRFFAFHFLLPFVIAGLTLVHLTFLHETGSNNPLGIPSDCDKIPFHPYYSIKDLLGFALMLIPLITLALFSPNLLGDPENFTPANPLATPPHIKPEWYFLFAYAILRSIPNKLGGVLALAASVLILFLIPLLHVSKQRSMTFRPLSQILFWTLVADLLILTWVGS.

The next 4 helical transmembrane spans lie at 1–21 (FGSLLGLCLITQIITGLLLAM), 45–66 (WLIRNLHANGASFFFICIYLHI), 81–101 (WNIGVILLLTLMATAFVGYVL), and 146–166 (FFAFHFLLPFVIAGLTLVHLT). Heme b-binding residues include His51 and His65. Heme b contacts are provided by His150 and His164. His169 provides a ligand contact to a ubiquinone. A run of 3 helical transmembrane segments spans residues 194–214 (IKDLLGFALMLIPLITLALFS), 256–276 (LGGVLALAASVLILFLIPLLH), and 288–308 (LSQILFWTLVADLLILTWVGS).

The protein belongs to the cytochrome b family. The cytochrome bc1 complex contains 11 subunits: 3 respiratory subunits (MT-CYB, CYC1 and UQCRFS1), 2 core proteins (UQCRC1 and UQCRC2) and 6 low-molecular weight proteins (UQCRH/QCR6, UQCRB/QCR7, UQCRQ/QCR8, UQCR10/QCR9, UQCR11/QCR10 and a cleavage product of UQCRFS1). This cytochrome bc1 complex then forms a dimer. It depends on heme b as a cofactor.

The protein resides in the mitochondrion inner membrane. Component of the ubiquinol-cytochrome c reductase complex (complex III or cytochrome b-c1 complex) that is part of the mitochondrial respiratory chain. The b-c1 complex mediates electron transfer from ubiquinol to cytochrome c. Contributes to the generation of a proton gradient across the mitochondrial membrane that is then used for ATP synthesis. The protein is Cytochrome b (MT-CYB) of Corvus corax (Common raven).